The following is a 248-amino-acid chain: Triosephosphate isomerase (248 aa).

2 residues coordinate substrate: Asn-10 and Lys-12. Catalysis depends on His-95, which acts as the Electrophile. Glu-165 acts as the Proton acceptor in catalysis.

Belongs to the triosephosphate isomerase family. In terms of assembly, homodimer.

It carries out the reaction D-glyceraldehyde 3-phosphate = dihydroxyacetone phosphate. It functions in the pathway carbohydrate biosynthesis; gluconeogenesis. Its pathway is carbohydrate degradation; glycolysis; D-glyceraldehyde 3-phosphate from glycerone phosphate: step 1/1. This Neurospora crassa (strain ATCC 24698 / 74-OR23-1A / CBS 708.71 / DSM 1257 / FGSC 987) protein is Triosephosphate isomerase (tpi-1).